The sequence spans 440 residues: MGDLELLLPGEAEVLVQGLHSFQLREMGSEGWSKQHENLEKLNMQAILDATVSQAEPIQELLVTHGKIPTLVEELIAVEMWKQKVFPVLCRLEDFKPQNTFPIYMVVHHEASIINLLETVFFHKEVCESADDTVLDLVDYCHRKLILLVARKGGGDLSEEERFQDSTPMQELQKQAEMMEFEISLKALSVLRYITDCMDSLSLSTLNRMLTTHNLPCLLVELLEHSPWSRREGGKLQHFESGRWQTVAPSEHQKLNKLDGQVWIALYNLLLSPEARTRYCLTNFAKGQLLKLQAFLTDTLLDQLPNLADLKSFLAHLALVETQPPKKDLVLEQIPEIWDRLERENKGKWQAIAKHQLQHVFSLSEKDLRQQAQRWAETYRLDVLEAVAPERPRCAYCSAEASKRCSRCQKVWYCCRECQVKHWEKHGKTCVLAAQGDRAK.

Zn(2+) contacts are provided by cysteine 394, cysteine 397, cysteine 405, cysteine 408, cysteine 414, cysteine 418, histidine 426, and cysteine 430. The MYND-type zinc finger occupies 394–430; that stretch reads CAYCSAEASKRCSRCQKVWYCCRECQVKHWEKHGKTC.

This sequence belongs to the ZMYND10 family. In terms of assembly, interacts (via C-terminus) with DNAAF11 (via CS domain); this interaction stabilizes DNAAF11 at the protein level. Interacts (via C-terminus) with DNAL1; this interaction stabilizes DNAL1 at the protein level. Interacts with DNAAF4, HSPA8, IQUB, RUVBL2 and DYNTL5.

The protein resides in the cytoplasm. Its subcellular location is the cytoskeleton. The protein localises to the microtubule organizing center. It localises to the centrosome. It is found in the centriolar satellite. The protein resides in the apical cell membrane. Its subcellular location is the dynein axonemal particle. In terms of biological role, plays a role in axonemal structure organization and motility. Involved in axonemal pre-assembly of inner and outer dynein arms (IDA and ODA, respectively) for proper axoneme building for cilia motility. May act by indirectly regulating transcription of dynein proteins. The protein is Zinc finger MYND domain-containing protein 10 (Zmynd10) of Rattus norvegicus (Rat).